Consider the following 205-residue polypeptide: Putative 3-methyladenine DNA glycosylase (205 aa).

This sequence belongs to the DNA glycosylase MPG family.

The sequence is that of Putative 3-methyladenine DNA glycosylase from Bacillus cereus (strain B4264).